The sequence spans 198 residues: Recombination protein RecR (198 aa).

The C4-type zinc-finger motif lies at 57 to 72 (CSVCGHITDRDPCYIC). Positions 80-175 (SVVCVVQEPK…KVTRIAHGLP (96 aa)) constitute a Toprim domain.

It belongs to the RecR family.

May play a role in DNA repair. It seems to be involved in an RecBC-independent recombinational process of DNA repair. It may act with RecF and RecO. The polypeptide is Recombination protein RecR (Bacillus cytotoxicus (strain DSM 22905 / CIP 110041 / 391-98 / NVH 391-98)).